The sequence spans 179 residues: MDNDVKLGRFISLILRHKPETINLKLDKNGWANTKELIEKISKSGREIDFEILERIVNENNKKRYSFNEDKTKIRAVQGHSIEVNLELKEVVPPAILYHGTAFKTLESIKKEGIKKMSRQHVHLSADIETAKNVATRHSGKYIILEIDTEAMLKENYKFYLSENKVWLTDFVPSKFIKF.

It belongs to the KptA/TPT1 family.

Removes the 2'-phosphate from RNA via an intermediate in which the phosphate is ADP-ribosylated by NAD followed by a presumed transesterification to release the RNA and generate ADP-ribose 1''-2''-cyclic phosphate (APPR&gt;P). May function as an ADP-ribosylase. In Fusobacterium nucleatum subsp. nucleatum (strain ATCC 25586 / DSM 15643 / BCRC 10681 / CIP 101130 / JCM 8532 / KCTC 2640 / LMG 13131 / VPI 4355), this protein is Probable RNA 2'-phosphotransferase.